The chain runs to 1514 residues: Mitogen-activated protein kinase-binding protein 1 (1514 aa).

At A2 the chain carries N-acetylalanine. 12 WD repeats span residues 88-129 (SSRK…QVAE), 132-173 (EHKY…VVAS), 175-213 (KVSS…TSKV), 276-315 (DSFT…FLST), 342-381 (ARYP…KVGK), 387-436 (YHSS…VHGS), 477-516 (DPRV…EMLK), 519-561 (AHDS…SLQQ), 565-606 (EHSS…DGVQ), 614-653 (VRKT…QKKL), 659-698 (GEDG…CVAT), and 701-740 (GHSE…TISM). Disordered stretches follow at residues 748 to 804 (RQRQ…PALP), 880 to 925 (PSLQ…SQPC), 951 to 1256 (EDGI…SSMA), and 1299 to 1336 (DIPK…GLGK). A compositionally biased stretch (acidic residues) spans 789–800 (KEGEDEGTEEEL). Polar residues-rich tracts occupy residues 905–925 (LETS…SQPC) and 961–971 (DNPTMDTSEFQ). The span at 996-1011 (DSACSVDYSSSCLSSP) shows a compositional bias: low complexity. A compositionally biased stretch (acidic residues) spans 1032 to 1048 (DLEEPAEGDEEEEEEEG). Positions 1113 to 1126 (PSPSSSSLALMSRP) are enriched in low complexity. Composition is skewed to polar residues over residues 1188 to 1200 (SPFS…QSVH) and 1245 to 1256 (HSYQNPTTSSMA). At S1198 the chain carries Phosphoserine.

In terms of assembly, can form homodimers (via C-terminus). Interacts (via C-terminus) with WDR62 (via C-terminus). Interacts with MAPK9. Interacts (via N-terminus) with NOD2; the interaction is enhanced in presence of muramyl dipeptide (MDP). Interacts with MAPK10. Expressed in intestinal mucosa, where it is detected in epithelial cells, endothelial cells, smooth muscle cells and immune cells, such as lymphocytes. Expressed in kidney.

It localises to the cytoplasm. The protein resides in the nucleus. It is found in the cytoskeleton. The protein localises to the spindle pole. Negative regulator of NOD2 function. It down-regulates NOD2-induced processes such as activation of NF-kappa-B signaling, IL8 secretion and antibacterial response. Involved in JNK signaling pathway. The chain is Mitogen-activated protein kinase-binding protein 1 (MAPKBP1) from Homo sapiens (Human).